A 166-amino-acid chain; its full sequence is Large ribosomal subunit protein uL10 (166 aa).

Belongs to the universal ribosomal protein uL10 family. As to quaternary structure, part of the ribosomal stalk of the 50S ribosomal subunit. The N-terminus interacts with L11 and the large rRNA to form the base of the stalk. The C-terminus forms an elongated spine to which L12 dimers bind in a sequential fashion forming a multimeric L10(L12)X complex.

Forms part of the ribosomal stalk, playing a central role in the interaction of the ribosome with GTP-bound translation factors. The chain is Large ribosomal subunit protein uL10 from Pseudomonas putida (strain W619).